Reading from the N-terminus, the 538-residue chain is Putative cysteine ligase BshC (538 aa).

The stretch at 462–533 (LDHLEKRLLK…DPLESNFKIL (72 aa)) forms a coiled coil.

Belongs to the BshC family.

The protein is Putative cysteine ligase BshC of Christiangramia forsetii (strain DSM 17595 / CGMCC 1.15422 / KT0803) (Gramella forsetii).